Here is an 899-residue protein sequence, read N- to C-terminus: Receptor-like protein kinase At3g21340 (899 aa).

The N-terminal stretch at 1–27 is a signal peptide; that stretch reads MEYHPQAIRLCALIFISFYALLHLVEA. The Extracellular segment spans residues 28-522; sequence QDQKGFISLD…GAKKMNVVIP (495 aa). N-linked (GlcNAc...) asparagine glycans are attached at residues asparagine 100, asparagine 146, asparagine 185, asparagine 240, asparagine 266, asparagine 420, asparagine 436, asparagine 449, asparagine 468, and asparagine 475. 3 LRR repeats span residues 415–438, 439–461, and 463–485; these read IVTS…QNLT, HLQE…LADI, and SLLV…LLQK. A helical transmembrane segment spans residues 523–543; that stretch reads IVASVAFVVVLGSALAFFFIF. The Cytoplasmic portion of the chain corresponds to 544-899; sequence KKKKTSNSQD…FDIGATPDAR (356 aa). The residue at position 583 (threonine 583) is a Phosphothreonine. Residues 592–865 enclose the Protein kinase domain; the sequence is NNFERVLGKG…QVVIELNECL (274 aa). ATP-binding positions include 598–606 and lysine 620; that span reads LGKGGFGMV. Tyrosine 665 carries the post-translational modification Phosphotyrosine. The active-site Proton acceptor is aspartate 717. The residue at position 751 (serine 751) is a Phosphoserine. A phosphothreonine mark is found at threonine 752 and threonine 757. Tyrosine 765 bears the Phosphotyrosine mark.

Belongs to the protein kinase superfamily. Ser/Thr protein kinase family. In terms of processing, autophosphorylated on Tyr and Thr residues.

It is found in the cell membrane. The enzyme catalyses L-seryl-[protein] + ATP = O-phospho-L-seryl-[protein] + ADP + H(+). The catalysed reaction is L-threonyl-[protein] + ATP = O-phospho-L-threonyl-[protein] + ADP + H(+). It carries out the reaction L-tyrosyl-[protein] + ATP = O-phospho-L-tyrosyl-[protein] + ADP + H(+). Functionally, probable receptor with a dual specificity kinase activity acting on both serine/threonine- and tyrosine-containing substrates. This is Receptor-like protein kinase At3g21340 from Arabidopsis thaliana (Mouse-ear cress).